A 342-amino-acid polypeptide reads, in one-letter code: RNA 3'-terminal phosphate cyclase (342 aa).

Residues Q102 and H283 to Q287 contribute to the ATP site. Residue H308 is the Tele-AMP-histidine intermediate of the active site.

The protein belongs to the RNA 3'-terminal cyclase family. Type 1 subfamily.

It localises to the cytoplasm. It catalyses the reaction a 3'-end 3'-phospho-ribonucleotide-RNA + ATP = a 3'-end 2',3'-cyclophospho-ribonucleotide-RNA + AMP + diphosphate. Its function is as follows. Catalyzes the conversion of 3'-phosphate to a 2',3'-cyclic phosphodiester at the end of RNA. The mechanism of action of the enzyme occurs in 3 steps: (A) adenylation of the enzyme by ATP; (B) transfer of adenylate to an RNA-N3'P to produce RNA-N3'PP5'A; (C) and attack of the adjacent 2'-hydroxyl on the 3'-phosphorus in the diester linkage to produce the cyclic end product. The biological role of this enzyme is unknown but it is likely to function in some aspects of cellular RNA processing. In Pseudomonas fluorescens (strain ATCC BAA-477 / NRRL B-23932 / Pf-5), this protein is RNA 3'-terminal phosphate cyclase.